Consider the following 544-residue polypeptide: CTP synthase (544 aa).

The amidoligase domain stretch occupies residues 1 to 265 (MTQYIFITGG…DDLVVKHFGL (265 aa)). Residue Ser13 participates in CTP binding. Ser13 lines the UTP pocket. ATP-binding positions include 14–19 (SLGKGI) and Asp71. Mg(2+) is bound by residues Asp71 and Glu139. CTP-binding positions include 146–148 (DIE), 186–191 (KTKPTQ), and Lys222. UTP contacts are provided by residues 186-191 (KTKPTQ) and Lys222. The region spanning 290-541 (TVAMVGKYVN…IAAALDYQTE (252 aa)) is the Glutamine amidotransferase type-1 domain. An L-glutamine-binding site is contributed by Gly351. Cys378 serves as the catalytic Nucleophile; for glutamine hydrolysis. L-glutamine contacts are provided by residues 379–382 (LGLQ), Glu402, and Arg469. Active-site residues include His514 and Glu516.

This sequence belongs to the CTP synthase family. As to quaternary structure, homotetramer.

It catalyses the reaction UTP + L-glutamine + ATP + H2O = CTP + L-glutamate + ADP + phosphate + 2 H(+). The catalysed reaction is L-glutamine + H2O = L-glutamate + NH4(+). The enzyme catalyses UTP + NH4(+) + ATP = CTP + ADP + phosphate + 2 H(+). The protein operates within pyrimidine metabolism; CTP biosynthesis via de novo pathway; CTP from UDP: step 2/2. With respect to regulation, allosterically activated by GTP, when glutamine is the substrate; GTP has no effect on the reaction when ammonia is the substrate. The allosteric effector GTP functions by stabilizing the protein conformation that binds the tetrahedral intermediate(s) formed during glutamine hydrolysis. Inhibited by the product CTP, via allosteric rather than competitive inhibition. Catalyzes the ATP-dependent amination of UTP to CTP with either L-glutamine or ammonia as the source of nitrogen. Regulates intracellular CTP levels through interactions with the four ribonucleotide triphosphates. This is CTP synthase from Dichelobacter nodosus (strain VCS1703A).